The sequence spans 373 residues: Secondary metabolism regulator laeA (373 aa).

Positions 55-81 are disordered; the sequence is ERDPAAGRWHANGSPSINSTSSKNPDR. Positions 67-77 are enriched in polar residues; it reads GSPSINSTSSK.

The protein belongs to the methyltransferase superfamily. LaeA methyltransferase family. Component of the heterotrimeric velvet complex composed of laeA, veA and velB; VeA acting as a bridging protein between laeA and velB.

The protein localises to the nucleus. It carries out the reaction L-methionyl-[protein] + S-adenosyl-L-methionine = S-methyl-L-methionyl-[protein] + S-adenosyl-L-homocysteine. Functionally, methyltransferase that performs automethylation. No other methyl-accepting substrate has been identified yet. Component of the velvet transcription factor complex that acts as a global regulator for secondary metabolite gene expression. Positively controls expression of 20% to 40% of major classes of secondary metabolite biosynthesis genes such as nonribosomal peptide synthetases, polyketide synthases, and P450 monooxygenases. Controls the expression of the gliotoxin gene cluster. Controls the expression of the fumitremorgin, fumagillin, and pseurotin gene clusters, where genes for fumagillin and pseurotin are physically intertwined in a single supercluster. Regulates the biosynthetic genes required for endocrocin production. Secondary metabolites under the transcriptional regulation of laeA are necessary for inhibition of angiogenesis during invasive infection in mice. Controls the expression of cell surface rodA, a hydrophobin that acts as an antiphagocytic molecule. Also regulates the expression of genes involved in conidial biosynthesis. The sequence is that of Secondary metabolism regulator laeA from Aspergillus fumigatus (strain ATCC MYA-4609 / CBS 101355 / FGSC A1100 / Af293) (Neosartorya fumigata).